The following is a 131-amino-acid chain: Small ribosomal subunit protein uS11 (131 aa).

It belongs to the universal ribosomal protein uS11 family. As to quaternary structure, part of the 30S ribosomal subunit. Interacts with proteins S7 and S18. Binds to IF-3.

Functionally, located on the platform of the 30S subunit, it bridges several disparate RNA helices of the 16S rRNA. Forms part of the Shine-Dalgarno cleft in the 70S ribosome. In Helicobacter pylori (strain G27), this protein is Small ribosomal subunit protein uS11.